We begin with the raw amino-acid sequence, 46 residues long: Amine oxidase [flavin-containing] A (46 aa).

This sequence belongs to the flavin monoamine oxidase family. In terms of assembly, monomer, homo- or heterodimer (containing two subunits of similar size). Each subunit contains a covalently bound flavin. Enzymatically active as monomer. FAD serves as cofactor.

Its subcellular location is the mitochondrion outer membrane. It catalyses the reaction a secondary aliphatic amine + O2 + H2O = a primary amine + an aldehyde + H2O2. The enzyme catalyses a primary methyl amine + O2 + H2O = an aldehyde + H2O2 + NH4(+). The catalysed reaction is (R)-adrenaline + O2 + H2O = (R)-3,4-dihydroxymandelaldehyde + methylamine + H2O2. It carries out the reaction dopamine + O2 + H2O = 3,4-dihydroxyphenylacetaldehyde + H2O2 + NH4(+). It catalyses the reaction tyramine + O2 + H2O = (4-hydroxyphenyl)acetaldehyde + H2O2 + NH4(+). The enzyme catalyses (R)-noradrenaline + O2 + H2O = (R)-3,4-dihydroxymandelaldehyde + H2O2 + NH4(+). The catalysed reaction is serotonin + O2 + H2O = (5-hydroxyindol-3-yl)acetaldehyde + H2O2 + NH4(+). It carries out the reaction kynuramine + O2 + H2O = 3-(2-aminophenyl)-3-oxopropanal + H2O2 + NH4(+). It catalyses the reaction tryptamine + O2 + H2O = indole-3-acetaldehyde + H2O2 + NH4(+). The enzyme catalyses 2-phenylethylamine + O2 + H2O = 2-phenylacetaldehyde + H2O2 + NH4(+). Functionally, catalyzes the oxidative deamination of primary and some secondary amine such as neurotransmitters, with concomitant reduction of oxygen to hydrogen peroxide and has important functions in the metabolism of neuroactive and vasoactive amines in the central nervous system and peripheral tissues. Preferentially oxidizes serotonin. Also catalyzes the oxidative deamination of kynuramine to 3-(2-aminophenyl)-3-oxopropanal that can spontaneously condense to 4-hydroxyquinoline. This is Amine oxidase [flavin-containing] A from Ovis aries (Sheep).